A 303-amino-acid polypeptide reads, in one-letter code: Small ribosomal subunit protein uS2 (303 aa).

The segment at 267–303 (AESLSMAEEPAPPSQRKGPASETAEPVAEPAVTESGS) is disordered.

This sequence belongs to the universal ribosomal protein uS2 family.

The sequence is that of Small ribosomal subunit protein uS2 from Solibacter usitatus (strain Ellin6076).